The following is a 146-amino-acid chain: Transcriptional repressor NrdR (146 aa).

A zinc finger spans residues 3–34 (CPFCQNPDTKVIDTRISDDGHSIRRRRVCPKC). The ATP-cone domain maps to 46 to 136 (LLVTKRSGGV…VYQNFAGLED (91 aa)).

This sequence belongs to the NrdR family. It depends on Zn(2+) as a cofactor.

Negatively regulates transcription of bacterial ribonucleotide reductase nrd genes and operons by binding to NrdR-boxes. The sequence is that of Transcriptional repressor NrdR from Bifidobacterium longum (strain NCC 2705).